Reading from the N-terminus, the 173-residue chain is Protein-export protein SecB (173 aa).

This sequence belongs to the SecB family. As to quaternary structure, homotetramer, a dimer of dimers. One homotetramer interacts with 1 SecA dimer.

Its subcellular location is the cytoplasm. One of the proteins required for the normal export of preproteins out of the cell cytoplasm. It is a molecular chaperone that binds to a subset of precursor proteins, maintaining them in a translocation-competent state. It also specifically binds to its receptor SecA. The polypeptide is Protein-export protein SecB (Novosphingobium aromaticivorans (strain ATCC 700278 / DSM 12444 / CCUG 56034 / CIP 105152 / NBRC 16084 / F199)).